A 337-amino-acid chain; its full sequence is Ketol-acid reductoisomerase (NADP(+)) (337 aa).

The KARI N-terminal Rossmann domain maps to 3-183 (VEMFYDDDAD…GGTRAGVIKT (181 aa)). NADP(+) is bound by residues 26 to 29 (YGSQ), Lys-49, Ser-52, Ser-54, and 84 to 87 (DTAQ). His-109 is an active-site residue. NADP(+) is bound at residue Gly-135. In terms of domain architecture, KARI C-terminal knotted spans 184-329 (TFKEETETDL…KKLRDLMSWV (146 aa)). Mg(2+)-binding residues include Asp-192, Glu-196, Glu-228, and Glu-232. Ser-253 contacts substrate.

It belongs to the ketol-acid reductoisomerase family. Requires Mg(2+) as cofactor.

It carries out the reaction (2R)-2,3-dihydroxy-3-methylbutanoate + NADP(+) = (2S)-2-acetolactate + NADPH + H(+). The enzyme catalyses (2R,3R)-2,3-dihydroxy-3-methylpentanoate + NADP(+) = (S)-2-ethyl-2-hydroxy-3-oxobutanoate + NADPH + H(+). It functions in the pathway amino-acid biosynthesis; L-isoleucine biosynthesis; L-isoleucine from 2-oxobutanoate: step 2/4. It participates in amino-acid biosynthesis; L-valine biosynthesis; L-valine from pyruvate: step 2/4. In terms of biological role, involved in the biosynthesis of branched-chain amino acids (BCAA). Catalyzes an alkyl-migration followed by a ketol-acid reduction of (S)-2-acetolactate (S2AL) to yield (R)-2,3-dihydroxy-isovalerate. In the isomerase reaction, S2AL is rearranged via a Mg-dependent methyl migration to produce 3-hydroxy-3-methyl-2-ketobutyrate (HMKB). In the reductase reaction, this 2-ketoacid undergoes a metal-dependent reduction by NADPH to yield (R)-2,3-dihydroxy-isovalerate. The sequence is that of Ketol-acid reductoisomerase (NADP(+)) from Rhodococcus erythropolis (strain PR4 / NBRC 100887).